Reading from the N-terminus, the 433-residue chain is Pyrimidine-nucleoside phosphorylase (433 aa).

Phosphate is bound at residue 81–83 (KHS). Residues Gly-88 and Thr-90 each contribute to the K(+) site. Phosphate contacts are provided by residues Thr-92, 108-110 (KMS), and Thr-120. The substrate site is built by Arg-168 and Lys-187. Residues Leu-243, Ala-246, and Glu-255 each contribute to the K(+) site.

The protein belongs to the thymidine/pyrimidine-nucleoside phosphorylase family. As to quaternary structure, homodimer. K(+) is required as a cofactor.

It carries out the reaction uridine + phosphate = alpha-D-ribose 1-phosphate + uracil. It catalyses the reaction thymidine + phosphate = 2-deoxy-alpha-D-ribose 1-phosphate + thymine. The catalysed reaction is 2'-deoxyuridine + phosphate = 2-deoxy-alpha-D-ribose 1-phosphate + uracil. Catalyzes phosphorolysis of the pyrimidine nucleosides uridine, thymidine and 2'-deoxyuridine with the formation of the corresponding pyrimidine base and ribose-1-phosphate. This chain is Pyrimidine-nucleoside phosphorylase (pdp), found in Staphylococcus aureus (strain NCTC 8325 / PS 47).